We begin with the raw amino-acid sequence, 199 residues long: Phosphoserine phosphatase RsbX (199 aa).

The region spanning 11–198 (QTLVYQLNKE…DDLTYILGQL (188 aa)) is the PPM-type phosphatase domain.

The catalysed reaction is O-phospho-L-serine + H2O = L-serine + phosphate. The enzyme catalyses O-phospho-D-serine + H2O = D-serine + phosphate. In terms of biological role, negative regulator of sigma-B activity. Dephosphorylates RsbS. Plays a role both in maintaining low sigma-B activity during growth and in reestablishing prestress sigma-B activity after induction. Could have a negative feedback role by indirectly communicating sigma-B protein levels. This chain is Phosphoserine phosphatase RsbX (rsbX), found in Bacillus subtilis (strain 168).